The chain runs to 677 residues: Beta-galactosidase (677 aa).

Residues 1 to 23 (MPGFLVRILPLLLVLLLLGPTRG) form the signal peptide. A propeptide spanning residues 24–28 (LRNAT) is cleaved from the precursor. N-linked (GlcNAc...) asparagine glycosylation occurs at N26. The substrate site is built by Y83, E129, and N187. The Proton donor role is filled by E188. A disulfide bond links C195 and C230. N247 carries an N-linked (GlcNAc...) asparagine glycan. Catalysis depends on E268, which acts as the Nucleophile. Y333 lines the substrate pocket. N-linked (GlcNAc...) asparagine glycans are attached at residues N464, N498, N542, N545, and N555. A disulfide bond links C626 and C634. Residues 650-677 (YDHPSKPVEKRLMPPPPQKNKDSWLDHV) form a disordered region. Composition is skewed to basic and acidic residues over residues 652-661 (HPSKPVEKRL) and 668-677 (KNKDSWLDHV).

The protein belongs to the glycosyl hydrolase 35 family. As to quaternary structure, homodimer. May form higher multimers. As to expression, detected in placenta (at protein level). Detected in fibroblasts and testis.

The protein resides in the lysosome. The protein localises to the cytoplasm. It is found in the perinuclear region. The catalysed reaction is Hydrolysis of terminal non-reducing beta-D-galactose residues in beta-D-galactosides.. Functionally, cleaves beta-linked terminal galactosyl residues from gangliosides, glycoproteins, and glycosaminoglycans. In terms of biological role, has no beta-galactosidase catalytic activity, but plays functional roles in the formation of extracellular elastic fibers (elastogenesis) and in the development of connective tissue. Seems to be identical to the elastin-binding protein (EBP), a major component of the non-integrin cell surface receptor expressed on fibroblasts, smooth muscle cells, chondroblasts, leukocytes, and certain cancer cell types. In elastin producing cells, associates with tropoelastin intracellularly and functions as a recycling molecular chaperone which facilitates the secretions of tropoelastin and its assembly into elastic fibers. The protein is Beta-galactosidase (GLB1) of Homo sapiens (Human).